The following is a 206-amino-acid chain: Ribosomal RNA small subunit methyltransferase G (206 aa).

S-adenosyl-L-methionine-binding positions include G73, L78, 124–125 (VE), and R139.

Belongs to the methyltransferase superfamily. RNA methyltransferase RsmG family.

Its subcellular location is the cytoplasm. It catalyses the reaction guanosine(527) in 16S rRNA + S-adenosyl-L-methionine = N(7)-methylguanosine(527) in 16S rRNA + S-adenosyl-L-homocysteine. Specifically methylates the N7 position of guanine in position 527 of 16S rRNA. The sequence is that of Ribosomal RNA small subunit methyltransferase G from Photobacterium profundum (strain SS9).